The primary structure comprises 619 residues: Dihydroxy-acid dehydratase (619 aa).

Asp81 contacts Mg(2+). Cys122 lines the [2Fe-2S] cluster pocket. 2 residues coordinate Mg(2+): Asp123 and Lys124. Position 124 is an N6-carboxylysine (Lys124). Cys195 serves as a coordination point for [2Fe-2S] cluster. Glu494 contributes to the Mg(2+) binding site. Catalysis depends on Ser520, which acts as the Proton acceptor.

It belongs to the IlvD/Edd family. As to quaternary structure, homodimer. [2Fe-2S] cluster is required as a cofactor. It depends on Mg(2+) as a cofactor.

The enzyme catalyses (2R)-2,3-dihydroxy-3-methylbutanoate = 3-methyl-2-oxobutanoate + H2O. The catalysed reaction is (2R,3R)-2,3-dihydroxy-3-methylpentanoate = (S)-3-methyl-2-oxopentanoate + H2O. It participates in amino-acid biosynthesis; L-isoleucine biosynthesis; L-isoleucine from 2-oxobutanoate: step 3/4. The protein operates within amino-acid biosynthesis; L-valine biosynthesis; L-valine from pyruvate: step 3/4. In terms of biological role, functions in the biosynthesis of branched-chain amino acids. Catalyzes the dehydration of (2R,3R)-2,3-dihydroxy-3-methylpentanoate (2,3-dihydroxy-3-methylvalerate) into 2-oxo-3-methylpentanoate (2-oxo-3-methylvalerate) and of (2R)-2,3-dihydroxy-3-methylbutanoate (2,3-dihydroxyisovalerate) into 2-oxo-3-methylbutanoate (2-oxoisovalerate), the penultimate precursor to L-isoleucine and L-valine, respectively. This chain is Dihydroxy-acid dehydratase, found in Shewanella frigidimarina (strain NCIMB 400).